We begin with the raw amino-acid sequence, 948 residues long: Putative JmjC domain-containing histone demethylation protein 1 (948 aa).

The 160-residue stretch at 243–402 (VSTTKLAYYV…PQLSIYNLEL (160 aa)) folds into the JmjC domain. Residue T294 participates in substrate binding. The Fe cation site is built by H297 and E299. K314 serves as a coordination point for substrate.

It belongs to the JHDM1 histone demethylase family. Fe(2+) serves as cofactor.

Its subcellular location is the nucleus. It carries out the reaction N(6),N(6)-dimethyl-L-lysyl(36)-[histone H3] + 2 2-oxoglutarate + 2 O2 = L-lysyl(36)-[histone H3] + 2 formaldehyde + 2 succinate + 2 CO2. Functionally, may be a histone demethylase that specifically demethylates 'Lys-36' of histone H3, thereby playing a central role in histone code. Represses transcriptional silencing by negatively affecting heterochromatin stability. The polypeptide is Putative JmjC domain-containing histone demethylation protein 1 (jhd1) (Schizosaccharomyces pombe (strain 972 / ATCC 24843) (Fission yeast)).